Reading from the N-terminus, the 240-residue chain is UDP-2,3-diacylglucosamine hydrolase (240 aa).

Residues D8, H10, D41, N79, and H114 each contribute to the Mn(2+) site. Substrate is bound at residue 79 to 80 (NR). Substrate is bound by residues D122, S160, N164, K167, and H195. The Mn(2+) site is built by H195 and H197.

Belongs to the LpxH family. The cofactor is Mn(2+).

It localises to the cell inner membrane. The enzyme catalyses UDP-2-N,3-O-bis[(3R)-3-hydroxytetradecanoyl]-alpha-D-glucosamine + H2O = 2-N,3-O-bis[(3R)-3-hydroxytetradecanoyl]-alpha-D-glucosaminyl 1-phosphate + UMP + 2 H(+). The protein operates within glycolipid biosynthesis; lipid IV(A) biosynthesis; lipid IV(A) from (3R)-3-hydroxytetradecanoyl-[acyl-carrier-protein] and UDP-N-acetyl-alpha-D-glucosamine: step 4/6. In terms of biological role, hydrolyzes the pyrophosphate bond of UDP-2,3-diacylglucosamine to yield 2,3-diacylglucosamine 1-phosphate (lipid X) and UMP by catalyzing the attack of water at the alpha-P atom. Involved in the biosynthesis of lipid A, a phosphorylated glycolipid that anchors the lipopolysaccharide to the outer membrane of the cell. The polypeptide is UDP-2,3-diacylglucosamine hydrolase (Pectobacterium atrosepticum (strain SCRI 1043 / ATCC BAA-672) (Erwinia carotovora subsp. atroseptica)).